Here is a 353-residue protein sequence, read N- to C-terminus: Nicotinate-nucleotide--dimethylbenzimidazole phosphoribosyltransferase (353 aa).

Residue glutamate 319 is the Proton acceptor of the active site.

This sequence belongs to the CobT family.

It catalyses the reaction 5,6-dimethylbenzimidazole + nicotinate beta-D-ribonucleotide = alpha-ribazole 5'-phosphate + nicotinate + H(+). Its pathway is nucleoside biosynthesis; alpha-ribazole biosynthesis; alpha-ribazole from 5,6-dimethylbenzimidazole: step 1/2. Its function is as follows. Catalyzes the synthesis of alpha-ribazole-5'-phosphate from nicotinate mononucleotide (NAMN) and 5,6-dimethylbenzimidazole (DMB). This is Nicotinate-nucleotide--dimethylbenzimidazole phosphoribosyltransferase from Chlorobaculum tepidum (strain ATCC 49652 / DSM 12025 / NBRC 103806 / TLS) (Chlorobium tepidum).